Here is a 200-residue protein sequence, read N- to C-terminus: Small ribosomal subunit protein uS4 (200 aa).

Residues 92–155 (SRLDAVVYQL…QKLNIIAESV (64 aa)) form the S4 RNA-binding domain.

It belongs to the universal ribosomal protein uS4 family. Part of the 30S ribosomal subunit. Contacts protein S5. The interaction surface between S4 and S5 is involved in control of translational fidelity.

Its function is as follows. One of the primary rRNA binding proteins, it binds directly to 16S rRNA where it nucleates assembly of the body of the 30S subunit. Functionally, with S5 and S12 plays an important role in translational accuracy. This Macrococcus caseolyticus (strain JCSC5402) (Macrococcoides caseolyticum) protein is Small ribosomal subunit protein uS4.